We begin with the raw amino-acid sequence, 294 residues long: 4-hydroxy-tetrahydrodipicolinate synthase (294 aa).

Thr-44 serves as a coordination point for pyruvate. The active-site Proton donor/acceptor is the Tyr-132. The active-site Schiff-base intermediate with substrate is Lys-160. Residue Val-202 participates in pyruvate binding.

This sequence belongs to the DapA family. As to quaternary structure, homotetramer; dimer of dimers.

It localises to the cytoplasm. It catalyses the reaction L-aspartate 4-semialdehyde + pyruvate = (2S,4S)-4-hydroxy-2,3,4,5-tetrahydrodipicolinate + H2O + H(+). The protein operates within amino-acid biosynthesis; L-lysine biosynthesis via DAP pathway; (S)-tetrahydrodipicolinate from L-aspartate: step 3/4. In terms of biological role, catalyzes the condensation of (S)-aspartate-beta-semialdehyde [(S)-ASA] and pyruvate to 4-hydroxy-tetrahydrodipicolinate (HTPA). In Leptospira borgpetersenii serovar Hardjo-bovis (strain L550), this protein is 4-hydroxy-tetrahydrodipicolinate synthase.